Here is a 630-residue protein sequence, read N- to C-terminus: Probable potassium transport system protein Kup (630 aa).

12 consecutive transmembrane segments (helical) span residues 17–37 (LAIA…LYSL), 51–71 (PSAI…VVGI), 105–125 (ITGL…GDAV), 144–164 (PQLS…LFWI), 175–195 (LFGP…VYHI), 218–238 (VLLA…AEAL), 255–275 (YVLV…LLLL), 283–303 (PFFL…STVA), 344–364 (IYVP…VIGF), 374–394 (YGIA…VVMV), 402–422 (LLVA…FGAN), and 428–448 (QGGW…MTWY).

This sequence belongs to the HAK/KUP transporter (TC 2.A.72) family.

It is found in the cell inner membrane. The catalysed reaction is K(+)(in) + H(+)(in) = K(+)(out) + H(+)(out). Transport of potassium into the cell. Likely operates as a K(+):H(+) symporter. The polypeptide is Probable potassium transport system protein Kup (Burkholderia thailandensis (strain ATCC 700388 / DSM 13276 / CCUG 48851 / CIP 106301 / E264)).